The primary structure comprises 166 residues: 3-isopropylmalate dehydratase small subunit 1 (166 aa).

This sequence belongs to the LeuD family. LeuD type 2 subfamily. Heterodimer of LeuC and LeuD.

The catalysed reaction is (2R,3S)-3-isopropylmalate = (2S)-2-isopropylmalate. It participates in amino-acid biosynthesis; L-leucine biosynthesis; L-leucine from 3-methyl-2-oxobutanoate: step 2/4. In terms of biological role, catalyzes the isomerization between 2-isopropylmalate and 3-isopropylmalate, via the formation of 2-isopropylmaleate. The chain is 3-isopropylmalate dehydratase small subunit 1 (leuD1) from Thermotoga maritima (strain ATCC 43589 / DSM 3109 / JCM 10099 / NBRC 100826 / MSB8).